We begin with the raw amino-acid sequence, 349 residues long: Divinyl chlorophyll a/b light-harvesting protein PcbE (349 aa).

A run of 6 helical transmembrane segments spans residues 27 to 47 (FIAAHIAHTGLIAFAAGGSTL), 65 to 85 (IFLAHLASIGIGFDEAGAWTG), 88 to 108 (VASIAIVHLVLSMVYGAGGLL), 201 to 221 (VLGGHAFLAFLEITGGAFHIA), 241 to 261 (AILSFSCAGLGWMAVVAAFWC), and 308 to 328 (LANVHYYFGFFFLQGHLWHAL).

Belongs to the PsbB/PsbC family. IsiA/Pcb subfamily. In terms of assembly, the antenna complex consists of divinyl chlorophylls (a and b) and divinyl chlorophyll a/b binding proteins and binds more divinyl chlorophyll b than does the antenna complex from high-light-adapted Prochlorococcus. The cofactor is divinyl chlorophyll a. Divinyl chlorophyll b is required as a cofactor.

It is found in the cellular thylakoid membrane. The antenna complex functions as a light receptor, it captures and delivers excitation energy to photosystems II and I. The Prochlorales pcb genes are not related to higher plant LHCs. The polypeptide is Divinyl chlorophyll a/b light-harvesting protein PcbE (pcbE) (Prochlorococcus marinus (strain NATL2A)).